The sequence spans 469 residues: Mitochondrial adenyl nucleotide antiporter SLC25A25 (469 aa).

The interval 1–165 (MLCLCLYVPI…LYWKHSTIFD (165 aa)) is regulatory N-terminal domain. The Mitochondrial intermembrane segment spans residues 1–189 (MLCLCLYVPI…ERQTGMWWRH (189 aa)). EF-hand domains are found at residues 47 to 80 (TYRQ…QDHE), 78 to 113 (DHEK…LGVK), and 114 to 149 (ISEQ…HPVE). Residues Asp-60, Asp-62, Asp-64, Gln-66, and Glu-71 each coordinate Ca(2+). A linker region region spans residues 151–160 (IPEIILYWKH). Residues 166–469 (VGENLTVPDE…LKITLGVQSR (304 aa)) are C-terminal transmembrane transporter domain. 3 Solcar repeats span residues 184–270 (GMWW…MKRL), 278–363 (LRIH…LKNT), and 375–463 (PGVF…LKIT). A helical membrane pass occupies residues 190–207 (LVAGGGAGAVSRTCTAPL). Residues 208–244 (DRLKVLMQVHASRSNNMCIIGGFTQMIREGGAKSLWR) are Mitochondrial matrix-facing. A helical membrane pass occupies residues 245–264 (GNGINVLKIAPESAIKFMAY). At 265-287 (EQMKRLVGSDQETLRIHERLVAG) the chain is on the mitochondrial intermembrane side. A helical transmembrane segment spans residues 288–301 (SLAGAIAQSSIYPM). Over 302–337 (EVLKTRMALRKTGQYSGMLDCAKRILAKEGVAAFYK) the chain is Mitochondrial matrix. Residues 338 to 357 (GYIPNMLGIIPYAGIDLAVY) traverse the membrane as a helical segment. The Mitochondrial intermembrane segment spans residues 358–380 (ETLKNTWLQRYAVNSADPGVFVL). A helical membrane pass occupies residues 381–398 (LACGTISSTCGQLASYPL). Topologically, residues 399–437 (ALVRTRMQAQASIEGAPEVTMSSLFKQILRTEGAFGLYR) are mitochondrial matrix. Residues 438 to 457 (GLAPNFMKVIPAVSISYVVY) form a helical membrane-spanning segment. The Mitochondrial intermembrane segment spans residues 458 to 469 (ENLKITLGVQSR).

It belongs to the mitochondrial carrier (TC 2.A.29) family. As to expression, mainly present in the liver and the skeletal muscle (at protein level).

The protein resides in the mitochondrion inner membrane. The enzyme catalyses Mg(2+)(out) + phosphate(in) + ATP(out) = Mg(2+)(in) + phosphate(out) + ATP(in). Activated by an increase in cytosolic calcium levels that induce a conformational change of the N-terminal regulatory domain, uncapping the channel and allowing transport. Electroneutral antiporter that most probably mediates the transport of adenyl nucleotides through the inner mitochondrial membrane. Originally identified as an ATP-magnesium/inorganic phosphate antiporter, it could have a broader specificity for adenyl nucleotides. By regulating the mitochondrial matrix adenyl nucleotide pool could adapt to changing cellular energetic demands and indirectly regulate adenyl nucleotide-dependent metabolic pathways. In Rattus norvegicus (Rat), this protein is Mitochondrial adenyl nucleotide antiporter SLC25A25.